The primary structure comprises 140 residues: L-fucose mutarotase (140 aa).

Catalysis depends on His22, which acts as the Proton donor. Substrate-binding positions include Asp30, Arg107, and 129–131 (YGN).

It belongs to the RbsD / FucU family. FucU mutarotase subfamily. Homodecamer.

The protein localises to the cytoplasm. It catalyses the reaction alpha-L-fucose = beta-L-fucose. Its pathway is carbohydrate metabolism; L-fucose metabolism. In terms of biological role, involved in the anomeric conversion of L-fucose. The protein is L-fucose mutarotase of Shigella boydii serotype 18 (strain CDC 3083-94 / BS512).